The following is an 86-amino-acid chain: MDAFDVIKMPIISEKTMKLIEEENKLVFYIDKKATKTDVKNAVKELFDVEVKDLNTLITPKGKKKAYIKLKDEYDAGEVAANLGIY.

Belongs to the universal ribosomal protein uL23 family. As to quaternary structure, part of the 50S ribosomal subunit. Contacts protein L29.

Functionally, binds to 23S rRNA. One of the proteins that surrounds the polypeptide exit tunnel on the outside of the ribosome. This is Large ribosomal subunit protein uL23 from Methanococcus aeolicus (strain ATCC BAA-1280 / DSM 17508 / OCM 812 / Nankai-3).